A 366-amino-acid chain; its full sequence is Homer protein homolog 1 (366 aa).

The WH1 domain occupies 1–110; sequence MGEQPIFSTR…EKFQEFKEAA (110 aa). Residue Gly-2 is modified to N-acetylglycine. The segment at 114–189 is disordered; it reads KEKSQEKMEL…RTQGLSHASS (76 aa). Polar residues predominate over residues 138 to 147; that stretch reads SPLTPESING. Residues 193 to 364 adopt a coiled-coil conformation; the sequence is KHWEAELATL…LRDNLAKLLE (172 aa). The segment at 302–366 is required for tetramerization; that stretch reads KLQEVEIRNK…DNLAKLLECS (65 aa). Ser-318 carries the phosphoserine modification.

This sequence belongs to the Homer family. In terms of assembly, tetramer; this tetrameric structure is critical for forming the high-order complex with SHANK1, which in turn is necessary for the structural and functional integrity of dendritic spines. Interacts with GRM1, GRM5, ITPR1, DYN3, RYR1, RYR2 and SHANK3. Interacts with IFT57 and OPHN1. Isoform 1 and isoform 2 encode coiled-coil structures that mediate homo- and heteromultimerization. Interacts with SHANK1; forms high-order polymerized complex with a mesh-like network structure, at least composed of SHANK1, HOMER1 and DLGAP1; the complex formation is SHANK1 multimerization dependent. Interacts with NFATC4. Interacts with DAGLA (via PPXXF motif); this interaction is required for the cell membrane localization of DAGLA. Interacts with SRGAP2. Highly expressed in cortex, Purkinje cells of the cerebellum, hippocampus, striatum and olfactory bulb. Isoform 1 and isoform 3 are expressed in skeletal and cardiac muscle.

It is found in the cytoplasm. The protein resides in the postsynaptic density. It localises to the synapse. The protein localises to the cell projection. Its subcellular location is the dendritic spine. Postsynaptic density scaffolding protein. Binds and cross-links cytoplasmic regions of GRM1, GRM5, ITPR1, DNM3, RYR1, RYR2, SHANK1 and SHANK3. By physically linking GRM1 and GRM5 with ER-associated ITPR1 receptors, it aids the coupling of surface receptors to intracellular calcium release. May also couple GRM1 to PI3 kinase through its interaction with AGAP2. Differentially regulates the functions of the calcium activated channel ryanodine receptors RYR1 and RYR2. Isoform 1 decreases the activity of RYR2, and increases the activity of RYR1, whereas isoform 3 counteracts the effects by competing for binding sites. Isoform 1 regulates the trafficking and surface expression of GRM5. Isoform 3 acts as a natural dominant negative, in dynamic competition with constitutively expressed isoform 1, and isoform 2 to regulate synaptic metabotropic glutamate function. Isoform 3, may be involved in the structural changes that occur at synapses during long-lasting neuronal plasticity and development. Forms a high-order complex with SHANK1, which in turn is necessary for the structural and functional integrity of dendritic spines. Negatively regulates T cell activation by inhibiting the calcineurin-NFAT pathway. Acts by competing with calcineurin/PPP3CA for NFAT protein binding, hence preventing NFAT activation by PPP3CA. This chain is Homer protein homolog 1, found in Rattus norvegicus (Rat).